The primary structure comprises 71 residues: Large ribosomal subunit protein bL31 (71 aa).

Zn(2+)-binding residues include C16, C18, C37, and C40.

It belongs to the bacterial ribosomal protein bL31 family. Type A subfamily. As to quaternary structure, part of the 50S ribosomal subunit. Requires Zn(2+) as cofactor.

Binds the 23S rRNA. This Wigglesworthia glossinidia brevipalpis protein is Large ribosomal subunit protein bL31.